We begin with the raw amino-acid sequence, 450 residues long: Tubulin alpha chain (450 aa).

Position 11 (Gln11) interacts with GTP. Lys40 is modified (N6-acetyllysine). Glu71, Ser140, Gly144, Thr145, Thr179, Asn206, and Asn228 together coordinate GTP. A Mg(2+)-binding site is contributed by Glu71. Glu254 is a catalytic residue.

Belongs to the tubulin family. As to quaternary structure, dimer of alpha and beta chains. A typical microtubule is a hollow water-filled tube with an outer diameter of 25 nm and an inner diameter of 15 nM. Alpha-beta heterodimers associate head-to-tail to form protofilaments running lengthwise along the microtubule wall with the beta-tubulin subunit facing the microtubule plus end conferring a structural polarity. Microtubules usually have 13 protofilaments but different protofilament numbers can be found in some organisms and specialized cells. Mg(2+) is required as a cofactor. Acetylation of alpha chains at Lys-40 stabilizes microtubules and affects affinity and processivity of microtubule motors. This modification has a role in multiple cellular functions, ranging from cell motility, cell cycle progression or cell differentiation to intracellular trafficking and signaling.

The protein localises to the cytoplasm. The protein resides in the cytoskeleton. It catalyses the reaction GTP + H2O = GDP + phosphate + H(+). Tubulin is the major constituent of microtubules, a cylinder consisting of laterally associated linear protofilaments composed of alpha- and beta-tubulin heterodimers. Microtubules grow by the addition of GTP-tubulin dimers to the microtubule end, where a stabilizing cap forms. Below the cap, tubulin dimers are in GDP-bound state, owing to GTPase activity of alpha-tubulin. This chain is Tubulin alpha chain, found in Tyrophagus putrescentiae (Mold mite).